A 307-amino-acid chain; its full sequence is Serine/threonine-protein phosphatase PP2A-2 catalytic subunit (307 aa).

Positions 55, 57, 83, and 115 each coordinate Mn(2+). H116 functions as the Proton donor in the catalytic mechanism. Mn(2+) is bound by residues H165 and H239.

It belongs to the PPP phosphatase family. PP-2A subfamily. It depends on Mn(2+) as a cofactor.

It is found in the cytoplasm. It catalyses the reaction O-phospho-L-seryl-[protein] + H2O = L-seryl-[protein] + phosphate. It carries out the reaction O-phospho-L-threonyl-[protein] + H2O = L-threonyl-[protein] + phosphate. The chain is Serine/threonine-protein phosphatase PP2A-2 catalytic subunit (PP2A2) from Oryza sativa subsp. indica (Rice).